The sequence spans 160 residues: Phosphopantetheine adenylyltransferase (160 aa).

T9 serves as a coordination point for substrate. ATP is bound by residues T9 to F10 and H17. K41, L73, and R87 together coordinate substrate. ATP-binding positions include G88 to R90, E98, and Y123 to T129.

This sequence belongs to the bacterial CoaD family. Homohexamer. Mg(2+) is required as a cofactor.

Its subcellular location is the cytoplasm. It carries out the reaction (R)-4'-phosphopantetheine + ATP + H(+) = 3'-dephospho-CoA + diphosphate. It functions in the pathway cofactor biosynthesis; coenzyme A biosynthesis; CoA from (R)-pantothenate: step 4/5. In terms of biological role, reversibly transfers an adenylyl group from ATP to 4'-phosphopantetheine, yielding dephospho-CoA (dPCoA) and pyrophosphate. This chain is Phosphopantetheine adenylyltransferase, found in Ectopseudomonas mendocina (strain ymp) (Pseudomonas mendocina).